Consider the following 367-residue polypeptide: Glutamate 5-kinase (367 aa).

Lys-10 provides a ligand contact to ATP. Residues Ser-50, Asp-137, and Asn-149 each contribute to the substrate site. ATP-binding positions include Thr-169–Asp-170 and Thr-211–Lys-217. One can recognise a PUA domain in the interval Ala-275–Glu-353.

This sequence belongs to the glutamate 5-kinase family.

Its subcellular location is the cytoplasm. It carries out the reaction L-glutamate + ATP = L-glutamyl 5-phosphate + ADP. Its pathway is amino-acid biosynthesis; L-proline biosynthesis; L-glutamate 5-semialdehyde from L-glutamate: step 1/2. In terms of biological role, catalyzes the transfer of a phosphate group to glutamate to form L-glutamate 5-phosphate. The chain is Glutamate 5-kinase from Yersinia pseudotuberculosis serotype IB (strain PB1/+).